Here is a 438-residue protein sequence, read N- to C-terminus: 23S rRNA (uracil(1939)-C(5))-methyltransferase RlmD (438 aa).

Residues 10–68 (KTKNVQTITADILDLDYQGLGVAKINGKTWFIENALPHEKVECRILEDKRQYGHAIVKK) enclose the TRAM domain. Positions 81, 87, 90, and 168 each coordinate [4Fe-4S] cluster. S-adenosyl-L-methionine is bound by residues Gln-271, Phe-300, Asn-305, Glu-321, Asp-348, and Asp-369. The active-site Nucleophile is Cys-395.

It belongs to the class I-like SAM-binding methyltransferase superfamily. RNA M5U methyltransferase family. RlmD subfamily.

The catalysed reaction is uridine(1939) in 23S rRNA + S-adenosyl-L-methionine = 5-methyluridine(1939) in 23S rRNA + S-adenosyl-L-homocysteine + H(+). Catalyzes the formation of 5-methyl-uridine at position 1939 (m5U1939) in 23S rRNA. The chain is 23S rRNA (uracil(1939)-C(5))-methyltransferase RlmD from Haemophilus influenzae (strain ATCC 51907 / DSM 11121 / KW20 / Rd).